Reading from the N-terminus, the 399-residue chain is Galactokinase (399 aa).

42–45 (EHTD) contacts substrate. ATP contacts are provided by residues Ser-76 and 133–139 (ASGLSSS). Mg(2+)-binding residues include Ser-139 and Glu-171. The active-site Proton acceptor is Asp-183. Residue Tyr-233 coordinates substrate.

Belongs to the GHMP kinase family. GalK subfamily. Monomer.

Its subcellular location is the cytoplasm. It carries out the reaction alpha-D-galactose + ATP = alpha-D-galactose 1-phosphate + ADP + H(+). It participates in carbohydrate metabolism; galactose metabolism. In terms of biological role, catalyzes the transfer of the gamma-phosphate of ATP to D-galactose to form alpha-D-galactose-1-phosphate (Gal-1-P). This Lactococcus lactis subsp. lactis (strain IL1403) (Streptococcus lactis) protein is Galactokinase.